We begin with the raw amino-acid sequence, 699 residues long: DNA topoisomerase 1 (699 aa).

2 stretches are compositionally biased toward basic and acidic residues: residues 1-15 (MAKS…KNEL) and 22-35 (IELK…ESKG). Positions 1–37 (MAKSKVVEKDKKNELDNQSADIELKGQSKNEESKGGK) are disordered. In terms of domain architecture, Toprim spans 38-146 (KKVIIVESPA…NIITFTEITE (109 aa)). Mg(2+) contacts are provided by E44 and D115. Residues 160–583 (DMNKVNAQLA…SFLKEFNKDL (424 aa)) form the Topo IA-type catalytic domain. Residues 194–199 (SAGRVQ) are interaction with DNA. The O-(5'-phospho-DNA)-tyrosine intermediate role is filled by Y324. The segment at 601-624 (CEDCSGNYKLKVGKYGLYLHCPNC) adopts a C4-type zinc-finger fold. The tract at residues 649-699 (QESQEENGEKNSVQSEESSANSGNRKFYRKRRTSGSKKSSTKSASSKAKKK) is disordered. Residues 661–672 (VQSEESSANSGN) are compositionally biased toward polar residues. A compositionally biased stretch (basic residues) spans 674-683 (KFYRKRRTSG). A compositionally biased stretch (low complexity) spans 684–699 (SKKSSTKSASSKAKKK).

The protein belongs to the type IA topoisomerase family. In terms of assembly, monomer. It depends on Mg(2+) as a cofactor.

It carries out the reaction ATP-independent breakage of single-stranded DNA, followed by passage and rejoining.. Its function is as follows. Releases the supercoiling and torsional tension of DNA, which is introduced during the DNA replication and transcription, by transiently cleaving and rejoining one strand of the DNA duplex. Introduces a single-strand break via transesterification at a target site in duplex DNA. The scissile phosphodiester is attacked by the catalytic tyrosine of the enzyme, resulting in the formation of a DNA-(5'-phosphotyrosyl)-enzyme intermediate and the expulsion of a 3'-OH DNA strand. The free DNA strand then undergoes passage around the unbroken strand, thus removing DNA supercoils. Finally, in the religation step, the DNA 3'-OH attacks the covalent intermediate to expel the active-site tyrosine and restore the DNA phosphodiester backbone. The polypeptide is DNA topoisomerase 1 (Fervidobacterium islandicum).